We begin with the raw amino-acid sequence, 206 residues long: Phosphoserine phosphatase (206 aa).

The active-site Nucleophile is Asp7. Mg(2+) contacts are provided by Asp7 and Asp9. Asp9 serves as the catalytic Proton donor. Substrate-binding positions include Glu16, Arg52, 95–96 (SG), and Lys140. A Mg(2+)-binding site is contributed by Asp163. Asn166 lines the substrate pocket.

The protein belongs to the HAD-like hydrolase superfamily. SerB family. Mg(2+) is required as a cofactor.

It carries out the reaction O-phospho-L-serine + H2O = L-serine + phosphate. It catalyses the reaction O-phospho-D-serine + H2O = D-serine + phosphate. The protein operates within amino-acid biosynthesis; L-serine biosynthesis; L-serine from 3-phospho-D-glycerate: step 3/3. This is Phosphoserine phosphatase from Wolinella succinogenes (strain ATCC 29543 / DSM 1740 / CCUG 13145 / JCM 31913 / LMG 7466 / NCTC 11488 / FDC 602W) (Vibrio succinogenes).